A 521-amino-acid chain; its full sequence is Probable glycogen synthase (521 aa).

Belongs to the glycosyltransferase 1 family. Bacterial/plant glycogen synthase subfamily.

It catalyses the reaction [(1-&gt;4)-alpha-D-glucosyl](n) + ADP-alpha-D-glucose = [(1-&gt;4)-alpha-D-glucosyl](n+1) + ADP + H(+). It participates in glycan biosynthesis; glycogen biosynthesis. Functionally, synthesizes alpha-1,4-glucan chains using ADP-glucose. This chain is Probable glycogen synthase (glgA), found in Methanocaldococcus jannaschii (strain ATCC 43067 / DSM 2661 / JAL-1 / JCM 10045 / NBRC 100440) (Methanococcus jannaschii).